A 663-amino-acid chain; its full sequence is Innate immunity activator protein (663 aa).

The disordered stretch occupies residues 1–73 (MLQMPKLNEI…PGPGWDQCSP (73 aa)). Over residues 23-47 (EGRWAGPTGPEAARPARGARGQARG) the composition is skewed to low complexity. Over residues 50–59 (ARWDSWEHSR) the composition is skewed to basic and acidic residues. Residues 117–147 (NAVRKQQRALEARLEACLEELRRLCLREAEL) are a coiled coil. A Nuclear localization signal (NLS) 1 motif is present at residues 164–170 (PKVRRRI). Disordered regions lie at residues 219 to 363 (RQRK…SSLW) and 375 to 405 (IRNV…QSLR). Basic and acidic residues predominate over residues 225–246 (ALQEEKKLRDLQRCLGDRRRNS). Positions 259–272 (ELSASDDSSLSDGL) are enriched in low complexity. Residues 282–298 (PKPPPESPAPPSRPLPP) show a composition bias toward pro residues. The span at 327–340 (TSLDHPYEKPRKSS) shows a compositional bias: basic and acidic residues. A Nuclear localization signal (NLS) 2 motif is present at residues 332–338 (PYEKPRK). Positions 349–361 (PATTPQDQPNPSS) are enriched in polar residues. A Nuclear localization signal (NLS) 3 motif is present at residues 422–428 (PRRRPTH). Residues 448–483 (PACHSCSEDSGSDVSSISHPTSPGSSSPDISFLRPL) form a disordered region. Low complexity predominate over residues 455 to 475 (EDSGSDVSSISHPTSPGSSSP).

In terms of assembly, interacts with IRAK1, NOD2 and RIPK2; the interaction takes place upon PRR stimulation. Interacts with YWHAQ/14-3-3T; the interaction increases upon PRR stimulation and is required for cellular signaling pathway activation and cytokine secretion. Interacts (via N-terminal domain) with CYTH1 and CYTH2 (via their N-terminal domains). Interacts with FBXW11 and BTRC; associates with SCF E3 ubiquitin-protein ligase complexes.

Its subcellular location is the nucleus. It localises to the cytoplasm. In terms of biological role, expressed in peripheral macrophages and intestinal myeloid-derived cells, is required for optimal PRR (pattern recognition receptor)-induced signaling, cytokine secretion, and bacterial clearance. Upon stimulation of a broad range of PRRs (pattern recognition receptor) such as NOD2 or TLR2, TLR3, TLR4, TLR5, TLR7 and TLR9, associates with YWHAQ/14-3-3T, which in turn leads to the recruitment and activation of MAP kinases and NF-kappa-B signaling complexes that amplifies PRR-induced downstream signals and cytokine secretion. In the intestine, regulates adherens junction stability by regulating the degradation of CYTH1 and CYTH2, probably acting as substrate cofactor for SCF E3 ubiquitin-protein ligase complexes. Stabilizes adherens junctions by limiting CYTH1-dependent ARF6 activation. The chain is Innate immunity activator protein from Mus musculus (Mouse).